The chain runs to 100 residues: Sweet protein mabinlin-4 (100 aa).

Intrachain disulfides connect cysteine 4–cysteine 49, cysteine 17–cysteine 38, cysteine 39–cysteine 87, and cysteine 51–cysteine 95.

Belongs to the 2S seed storage albumins family. Heterodimer of a small A and a large B chain linked by disulfide bonds.

Functionally, heat stable 2S seed storage protein having sweetness-inducing activity. The chain is Sweet protein mabinlin-4 from Capparis masaikai (Mabinlang).